Consider the following 236-residue polypeptide: Small ribosomal subunit protein uS2c (236 aa).

This sequence belongs to the universal ribosomal protein uS2 family.

It is found in the plastid. Its subcellular location is the chloroplast. The polypeptide is Small ribosomal subunit protein uS2c (rps2) (Lepidium virginicum (Virginia pepperweed)).